The sequence spans 293 residues: MQGFINLNKQFGWTSHDCVARLRKMLRLKRVGHAGTLDPAATGVLPIAVGKATRLLQYLPSDKAYKATVRFGVQTTTDDLQGEIITSQPCRGLSLSEVKTALPQFIGKIEQIPPIYSAIQVEGKRLYDLARKGEIIEVPARTVEVFSIDVLDWREGDFPELDVAIACGSGTYIRAIARDLGAVFHTGGTLAALIRTHSSGFNLTDSLTLTDLETQLQAGTFEPTPADAALQCLPSVTLPSISAQKWCQGQRIELNLETIGKVRVYQAETNIFLGIGELQAGVLIPQMVFEPIS.

Catalysis depends on D38, which acts as the Nucleophile.

It belongs to the pseudouridine synthase TruB family. Type 1 subfamily.

It catalyses the reaction uridine(55) in tRNA = pseudouridine(55) in tRNA. Functionally, responsible for synthesis of pseudouridine from uracil-55 in the psi GC loop of transfer RNAs. The chain is tRNA pseudouridine synthase B from Nostoc sp. (strain PCC 7120 / SAG 25.82 / UTEX 2576).